We begin with the raw amino-acid sequence, 192 residues long: Nucleoside triphosphate pyrophosphatase (192 aa).

The active-site Proton acceptor is the D73.

It belongs to the Maf family. Requires a divalent metal cation as cofactor.

The protein localises to the cytoplasm. The enzyme catalyses a ribonucleoside 5'-triphosphate + H2O = a ribonucleoside 5'-phosphate + diphosphate + H(+). The catalysed reaction is a 2'-deoxyribonucleoside 5'-triphosphate + H2O = a 2'-deoxyribonucleoside 5'-phosphate + diphosphate + H(+). Its function is as follows. Nucleoside triphosphate pyrophosphatase. May have a dual role in cell division arrest and in preventing the incorporation of modified nucleotides into cellular nucleic acids. The polypeptide is Nucleoside triphosphate pyrophosphatase (Ehrlichia ruminantium (strain Gardel)).